The sequence spans 20 residues: SPAFQAQKQAKVNDVLDKLY.

The protein belongs to the tyrosinase family. Hemocyanin subfamily. Hemolymph.

It localises to the secreted. It is found in the extracellular space. Functionally, hemocyanins are copper-containing oxygen carriers occurring freely dissolved in the hemolymph of many mollusks and arthropods. This Homarus americanus (American lobster) protein is Hemocyanin subunit 6.